The primary structure comprises 427 residues: Adenylosuccinate synthetase (427 aa).

Residues 12-18 (GDEGKGK) and 40-42 (GHT) contribute to the GTP site. Asp-13 acts as the Proton acceptor in catalysis. Mg(2+) is bound by residues Asp-13 and Gly-40. Residues 13-16 (DEGK), 38-41 (NAGH), Thr-128, Arg-142, Gln-223, Thr-238, and Arg-302 each bind IMP. The Proton donor role is filled by His-41. A substrate-binding site is contributed by 298–304 (TVTGRAR). GTP contacts are provided by residues Arg-304, 330 to 332 (RLD), and 412 to 414 (SVG).

Belongs to the adenylosuccinate synthetase family. In terms of assembly, homodimer. Requires Mg(2+) as cofactor.

Its subcellular location is the cytoplasm. The enzyme catalyses IMP + L-aspartate + GTP = N(6)-(1,2-dicarboxyethyl)-AMP + GDP + phosphate + 2 H(+). Its pathway is purine metabolism; AMP biosynthesis via de novo pathway; AMP from IMP: step 1/2. Functionally, plays an important role in the de novo pathway of purine nucleotide biosynthesis. Catalyzes the first committed step in the biosynthesis of AMP from IMP. This chain is Adenylosuccinate synthetase, found in Brachyspira hyodysenteriae (strain ATCC 49526 / WA1).